The sequence spans 183 residues: Probable chemoreceptor glutamine deamidase CheD (183 aa).

Belongs to the CheD family.

It carries out the reaction L-glutaminyl-[protein] + H2O = L-glutamyl-[protein] + NH4(+). Its function is as follows. Probably deamidates glutamine residues to glutamate on methyl-accepting chemotaxis receptors (MCPs), playing an important role in chemotaxis. This chain is Probable chemoreceptor glutamine deamidase CheD, found in Rhizobium meliloti (strain 1021) (Ensifer meliloti).